An 87-amino-acid chain; its full sequence is MKAHIHPPYRTVVFHDTSVNEYFKVGSTIRTDRVIELDGETFPYVTIDVSSKSHPYYTGKQKTFASEGSAARFRQRFGGFIDAKRKA.

Belongs to the bacterial ribosomal protein bL31 family. Type B subfamily. Part of the 50S ribosomal subunit.

The protein is Large ribosomal subunit protein bL31B of Klebsiella pneumoniae (strain 342).